A 577-amino-acid chain; its full sequence is MNKETLAERLNASAGRQKADTVIKNGKIMDVFNQEWISADIAITGGVIVGLGEYEGEEVIDAEGQMIVPGFIDGHVHIESSMVTPIEFAKAVLPHGVTTVITDPHEIANVSGAKGISFMIEQAKKAPLNIRFMLPSCVPAASFERSGAVLKAEDLKPFYQEKEVLGLAEVMDYVSVAEGEEDMLQKLLDAKRHGKRIDGHLAGLSSDIINIYRTAMVSNDHEVTTKEEALDRIRRGMYVMLREGSVAKNTLNVLPAVNEKNARRFFFCTDDKHVDDLLSEGSVNHQVKMAIKAGLDPFLAYQLASLNAAECYGLETKGAVAPGFDADLLFISDVREAVVTKTMVAGRTVAENGRTVYEQSAGSYSPDQALLDTVRLKAPLTESDFHIPIQEGKKMNVIEMIPNHLETRKKEVPAPSADAFCPDTENDLLKIAVAERHSGEKMIGLGIVQGFGLKEGAIATTISHDSHNIIAVGTNDADLAKAINRLRDTGGGLTAVKNGELLHSVPLPIAGLLSDKSAEWVNDSLGVLHEKLPLLGFTGDFNPFLTLSFLALPVIPDIKMTAAGLFDVKAFQHIPLQ.

It belongs to the metallo-dependent hydrolases superfamily. Adenine deaminase family. The cofactor is Mn(2+).

It catalyses the reaction adenine + H2O + H(+) = hypoxanthine + NH4(+). The sequence is that of Adenine deaminase from Bacillus velezensis (strain DSM 23117 / BGSC 10A6 / LMG 26770 / FZB42) (Bacillus amyloliquefaciens subsp. plantarum).